We begin with the raw amino-acid sequence, 301 residues long: Beta-1,3-galactosyltransferase 5 (301 aa).

Topologically, residues 1–7 (MAFPKMR) are cytoplasmic. The chain crosses the membrane as a helical; Signal-anchor for type II membrane protein span at residues 8 to 28 (LMYVCLLVLGALCLYFSMYSL). Over 29 to 301 (NLFKEQSFVY…LLDYWQALEN (273 aa)) the chain is Lumenal. Residues Asn130, Asn174, and Asn231 are each glycosylated (N-linked (GlcNAc...) asparagine).

This sequence belongs to the glycosyltransferase 31 family.

The protein localises to the golgi apparatus membrane. It catalyses the reaction a globoside Gb4Cer (d18:1(4E)) + UDP-alpha-D-galactose = a globoside GalGb4Cer (d18:1(4E)) + UDP + H(+). The protein operates within protein modification; protein glycosylation. Functionally, catalyzes the transfer of Gal to GlcNAc-based acceptors with a preference for the core3 O-linked glycan GlcNAc(beta1,3)GalNAc structure. Can use glycolipid LC3Cer as an efficient acceptor. The polypeptide is Beta-1,3-galactosyltransferase 5 (B3GALT5) (Pan paniscus (Pygmy chimpanzee)).